We begin with the raw amino-acid sequence, 400 residues long: Argininosuccinate synthase (400 aa).

Residue A8–S16 coordinates ATP. Y85 serves as a coordination point for L-citrulline. G115 serves as a coordination point for ATP. Residues T117, N121, and D122 each contribute to the L-aspartate site. N121 contributes to the L-citrulline binding site. L-citrulline is bound by residues R125, S173, E258, and Y270.

This sequence belongs to the argininosuccinate synthase family. Type 1 subfamily. In terms of assembly, homotetramer.

The protein resides in the cytoplasm. The catalysed reaction is L-citrulline + L-aspartate + ATP = 2-(N(omega)-L-arginino)succinate + AMP + diphosphate + H(+). It functions in the pathway amino-acid biosynthesis; L-arginine biosynthesis; L-arginine from L-ornithine and carbamoyl phosphate: step 2/3. This is Argininosuccinate synthase from Staphylococcus haemolyticus (strain JCSC1435).